The primary structure comprises 320 residues: Biotin synthase 2 (320 aa).

A Radical SAM core domain is found at 34–261 (NVVQCSKLLS…ASYVRLSAGR (228 aa)). [4Fe-4S] cluster is bound by residues Cys49, Cys53, and Cys56. Residues Cys93, Cys124, Cys184, and Arg256 each coordinate [2Fe-2S] cluster.

The protein belongs to the radical SAM superfamily. Biotin synthase family. In terms of assembly, homodimer. Requires [4Fe-4S] cluster as cofactor. The cofactor is [2Fe-2S] cluster.

The catalysed reaction is (4R,5S)-dethiobiotin + (sulfur carrier)-SH + 2 reduced [2Fe-2S]-[ferredoxin] + 2 S-adenosyl-L-methionine = (sulfur carrier)-H + biotin + 2 5'-deoxyadenosine + 2 L-methionine + 2 oxidized [2Fe-2S]-[ferredoxin]. Its pathway is cofactor biosynthesis; biotin biosynthesis; biotin from 7,8-diaminononanoate: step 2/2. In terms of biological role, catalyzes the conversion of dethiobiotin (DTB) to biotin by the insertion of a sulfur atom into dethiobiotin via a radical-based mechanism. The chain is Biotin synthase 2 from Paracoccus denitrificans (strain Pd 1222).